Here is a 257-residue protein sequence, read N- to C-terminus: Protein YIPF5 (257 aa).

Residues 1–124 (MSGFDNFNTD…KASDGSIMNE (124 aa)) lie on the Cytoplasmic side of the membrane. The chain crosses the membrane as a helical span at residues 125–145 (TDLAGPMVFCLAFGATLLLTG). A topological domain (lumenal) is located at residue Lys146. Residues 147-167 (IQFGYVYGISAIGCLGMYCLL) traverse the membrane as a helical segment. Topologically, residues 168–173 (NLMSMT) are cytoplasmic. Residues 174–194 (GVSFGCVASVLGYCLLPMIIL) traverse the membrane as a helical segment. The Lumenal portion of the chain corresponds to 195-196 (SS). Residues 197 to 217 (FGVIFSLQGIMGIILTAAIIG) form a helical membrane-spanning segment. Topologically, residues 218–236 (WCSLSASKIFISALAMDGQ) are cytoplasmic. The chain crosses the membrane as a helical span at residues 237-257 (QLLVAYPCALLYGVFALISVF).

The protein belongs to the YIP1 family.

The protein resides in the endoplasmic reticulum membrane. It localises to the golgi apparatus. The protein localises to the cis-Golgi network membrane. Functionally, plays a role in transport between endoplasmic reticulum and Golgi. The chain is Protein YIPF5 (yipf5) from Danio rerio (Zebrafish).